A 186-amino-acid polypeptide reads, in one-letter code: Elongation factor P (186 aa).

It belongs to the elongation factor P family.

The protein localises to the cytoplasm. Its pathway is protein biosynthesis; polypeptide chain elongation. In terms of biological role, involved in peptide bond synthesis. Stimulates efficient translation and peptide-bond synthesis on native or reconstituted 70S ribosomes in vitro. Probably functions indirectly by altering the affinity of the ribosome for aminoacyl-tRNA, thus increasing their reactivity as acceptors for peptidyl transferase. The sequence is that of Elongation factor P from Polynucleobacter necessarius subsp. necessarius (strain STIR1).